Here is a 48-residue protein sequence, read N- to C-terminus: Small, acid-soluble spore protein N (48 aa).

Residues 1–48 (MGINKKDGQPQYAPSHLGTKPVKYKRNKGEKFHDKSNGHPIVMQTKGE) form a disordered region. A compositionally biased stretch (basic and acidic residues) spans 27-37 (NKGEKFHDKSN).

This sequence belongs to the SspN family.

The protein localises to the spore core. This chain is Small, acid-soluble spore protein N, found in Bacillus velezensis (strain DSM 23117 / BGSC 10A6 / LMG 26770 / FZB42) (Bacillus amyloliquefaciens subsp. plantarum).